The chain runs to 173 residues: ATP synthase subunit b (173 aa).

The chain crosses the membrane as a helical span at residues Leu12–Val32.

It belongs to the ATPase B chain family. As to quaternary structure, F-type ATPases have 2 components, F(1) - the catalytic core - and F(0) - the membrane proton channel. F(1) has five subunits: alpha(3), beta(3), gamma(1), delta(1), epsilon(1). F(0) has three main subunits: a(1), b(2) and c(10-14). The alpha and beta chains form an alternating ring which encloses part of the gamma chain. F(1) is attached to F(0) by a central stalk formed by the gamma and epsilon chains, while a peripheral stalk is formed by the delta and b chains.

The protein resides in the cell inner membrane. Its function is as follows. F(1)F(0) ATP synthase produces ATP from ADP in the presence of a proton or sodium gradient. F-type ATPases consist of two structural domains, F(1) containing the extramembraneous catalytic core and F(0) containing the membrane proton channel, linked together by a central stalk and a peripheral stalk. During catalysis, ATP synthesis in the catalytic domain of F(1) is coupled via a rotary mechanism of the central stalk subunits to proton translocation. In terms of biological role, component of the F(0) channel, it forms part of the peripheral stalk, linking F(1) to F(0). This chain is ATP synthase subunit b, found in Leptospira borgpetersenii serovar Hardjo-bovis (strain JB197).